The following is a 64-amino-acid chain: Large ribosomal subunit protein uL29 (64 aa).

Belongs to the universal ribosomal protein uL29 family.

The chain is Large ribosomal subunit protein uL29 from Ligilactobacillus salivarius (strain UCC118) (Lactobacillus salivarius).